A 23-amino-acid chain; its full sequence is HLLQFNKMIKFETRKNAIPFYAF.

In terms of assembly, heterodimer of an acidic subunit and a basic chain. The acidic subunit is non-toxic, without enzymatic activity and comprises 3 peptides that are cross-linked by 7 disulfide bridges. The basic subunit is toxic, has phospholipase A2 activity and is composed of a single chain. Requires Ca(2+) as cofactor. Contains 7 disulfide bonds. As to expression, expressed by the venom gland.

The protein resides in the secreted. The enzyme catalyses a 1,2-diacyl-sn-glycero-3-phosphocholine + H2O = a 1-acyl-sn-glycero-3-phosphocholine + a fatty acid + H(+). Snake venom phospholipase A2 (PLA2) that shows presynaptic neurotoxicity. PLA2 catalyzes the calcium-dependent hydrolysis of the 2-acyl groups in 3-sn-phosphoglycerides. In Crotalus basiliscus (Mexican west-coast rattlesnake), this protein is Basic phospholipase A2 CB1.